The sequence spans 142 residues: Hemoglobin subunit alpha-A (142 aa).

Positions valine 2–arginine 142 constitute a Globin domain. An O2-binding site is contributed by histidine 59. Histidine 88 is a heme b binding site.

The protein belongs to the globin family. In terms of assembly, heterotetramer of two alpha chains and two beta chains. As to expression, red blood cells.

Its function is as follows. Involved in oxygen transport from the lung to the various peripheral tissues. This is Hemoglobin subunit alpha-A (HBAA) from Coturnix japonica (Japanese quail).